The sequence spans 325 residues: Undecaprenyl-phosphate 4-deoxy-4-formamido-L-arabinose transferase (325 aa).

Helical transmembrane passes span 234 to 254 and 269 to 289; these read LLSV…LLLI and VFML…GMGL.

This sequence belongs to the glycosyltransferase 2 family.

The protein resides in the cell inner membrane. The enzyme catalyses UDP-4-deoxy-4-formamido-beta-L-arabinose + di-trans,octa-cis-undecaprenyl phosphate = 4-deoxy-4-formamido-alpha-L-arabinopyranosyl di-trans,octa-cis-undecaprenyl phosphate + UDP. Its pathway is glycolipid biosynthesis; 4-amino-4-deoxy-alpha-L-arabinose undecaprenyl phosphate biosynthesis; 4-amino-4-deoxy-alpha-L-arabinose undecaprenyl phosphate from UDP-4-deoxy-4-formamido-beta-L-arabinose and undecaprenyl phosphate: step 1/2. It participates in bacterial outer membrane biogenesis; lipopolysaccharide biosynthesis. In terms of biological role, catalyzes the transfer of 4-deoxy-4-formamido-L-arabinose from UDP to undecaprenyl phosphate. The modified arabinose is attached to lipid A and is required for resistance to polymyxin and cationic antimicrobial peptides. The sequence is that of Undecaprenyl-phosphate 4-deoxy-4-formamido-L-arabinose transferase from Erwinia tasmaniensis (strain DSM 17950 / CFBP 7177 / CIP 109463 / NCPPB 4357 / Et1/99).